A 410-amino-acid polypeptide reads, in one-letter code: Lissencephaly-1 homolog (410 aa).

One can recognise a LisH domain in the interval 7 to 39 (QRDELNRAIADYLRSNGYEEAYSVFKKEAELDM). A coiled-coil region spans residues 56 to 82 (TSVIRLQKKVMELESKLNEAKEEFTSG). WD repeat units follow at residues 106–147 (GHRS…RTLK), 148–189 (GHTD…RTMH), 190–229 (GHDH…CVKT), 232–271 (GHRE…CKAE), 274–333 (EHEH…CLMT), 336–377 (GHDN…KTLN), and 379–410 (HEHF…WECR).

This sequence belongs to the WD repeat LIS1/nudF family. Can self-associate. Component of the cytosolic PAF-AH (I) heterotetrameric enzyme, which is composed of PAFAH1B1 (beta), PAFAH1B2 (alpha2) and PAFAH1B3 (alpha1) subunits. The catalytic activity of the enzyme resides in the alpha1 (PAFAH1B3) and alpha2 (PAFAH1B2) subunits, whereas the beta subunit (PAFAH1B1) has regulatory activity. Trimer formation is not essential for the catalytic activity. Interacts with dynein, dynactin, nde1 and ndel1.

The protein localises to the cytoplasm. It is found in the cytoskeleton. It localises to the microtubule organizing center. The protein resides in the centrosome. Functionally, regulatory subunit (beta subunit) of the cytosolic type I platelet-activating factor (PAF) acetylhydrolase (PAF-AH (I)), an enzyme that catalyzes the hydrolyze of the acetyl group at the sn-2 position of PAF and its analogs and participates in PAF inactivation. Regulates the PAF-AH (I) activity in a catalytic dimer composition-dependent manner. Positively regulates the activity of the minus-end directed microtubule motor protein dynein. May enhance dynein-mediated microtubule sliding by targeting dynein to the microtubule plus end. Required for several dynein- and microtubule-dependent processes such as the maintenance of Golgi integrity, the peripheral transport of microtubule fragments and the coupling of the nucleus and centrosome. May be required for proliferation of neuronal precursors and neuronal migration. The sequence is that of Lissencephaly-1 homolog (pafah1b1) from Xenopus laevis (African clawed frog).